The following is a 634-amino-acid chain: Chaperone protein DnaK (634 aa).

Threonine 197 is modified (phosphothreonine; by autocatalysis). The disordered stretch occupies residues 592 to 634; that stretch reads IGSSVYQQPGNQPPAPGGPNANASDDKGPDDDVIDADFTETKD. The span at 619–634 shows a compositional bias: acidic residues; it reads GPDDDVIDADFTETKD.

Belongs to the heat shock protein 70 family.

Its function is as follows. Acts as a chaperone. This is Chaperone protein DnaK from Prochlorococcus marinus (strain MIT 9515).